Here is a 344-residue protein sequence, read N- to C-terminus: 1-acyl-sn-glycerol-3-phosphate acyltransferase BAT2, chloroplastic (344 aa).

A chloroplast-targeting transit peptide spans 1 to 49; that stretch reads MDVASAPGVSSHPPYYSKPICSSQSSLIRIPINKGCCFARSSNLITSLH. A helical membrane pass occupies residues 113–133; that stretch reads GICFCLVAGVSAIVLIVLMIT. The short motif at 188–193 is the HXXXXD motif element; sequence HQSFLD. Residues 210–230 traverse the membrane as a helical segment; that stretch reads TGIFVIPVIGWAMSMMGVVPL.

Belongs to the 1-acyl-sn-glycerol-3-phosphate acyltransferase family. Widely expressed.

Its subcellular location is the plastid. The protein localises to the chloroplast membrane. It carries out the reaction a fatty acyl-[ACP] + a 1-acyl-sn-glycero-3-phosphate = a 1,2-diacyl-sn-glycero-3-phosphate + holo-[ACP]. The catalysed reaction is a 1-acyl-sn-glycero-3-phosphate + an acyl-CoA = a 1,2-diacyl-sn-glycero-3-phosphate + CoA. It functions in the pathway phospholipid metabolism; CDP-diacylglycerol biosynthesis; CDP-diacylglycerol from sn-glycerol 3-phosphate: step 2/3. In terms of biological role, plastidial enzyme of the prokaryotic glycerol-3-phosphate pathway that converts lysophosphatidic acid (LPA) into phosphatidic acid by incorporating an acyl moiety at position sn-2. Utilizes palmitoyl-ACP (16:0-ACP) to produce phosphatidic acid containing a saturated group at position sn-2, which is characteristic of lipids synthesized by the prokaryotic pathway. In vitro, can use 16:0-CoA as acyl donor. This Brassica napus (Rape) protein is 1-acyl-sn-glycerol-3-phosphate acyltransferase BAT2, chloroplastic.